The sequence spans 307 residues: Oxygen-dependent coproporphyrinogen-III oxidase (307 aa).

S97 provides a ligand contact to substrate. Positions 101 and 111 each coordinate a divalent metal cation. The active-site Proton donor is the H111. 113–115 (NVR) contacts substrate. A divalent metal cation-binding residues include H152 and H182. Residues 247–282 (YVEFNLVWDRGTHFGLQSGGRTESILMSMPPLASWS) are important for dimerization. Residue 265–267 (GGR) coordinates substrate.

The protein belongs to the aerobic coproporphyrinogen-III oxidase family. Homodimer. A divalent metal cation serves as cofactor.

The protein localises to the cytoplasm. It catalyses the reaction coproporphyrinogen III + O2 + 2 H(+) = protoporphyrinogen IX + 2 CO2 + 2 H2O. It participates in porphyrin-containing compound metabolism; protoporphyrin-IX biosynthesis; protoporphyrinogen-IX from coproporphyrinogen-III (O2 route): step 1/1. Functionally, involved in the heme biosynthesis. Catalyzes the aerobic oxidative decarboxylation of propionate groups of rings A and B of coproporphyrinogen-III to yield the vinyl groups in protoporphyrinogen-IX. The polypeptide is Oxygen-dependent coproporphyrinogen-III oxidase (Polaromonas naphthalenivorans (strain CJ2)).